A 279-amino-acid chain; its full sequence is Protein CMSS1 (279 aa).

Residues 1-10 (MADDLGDEWW) are compositionally biased toward acidic residues. A disordered region spans residues 1 to 89 (MADDLGDEWW…DVLAKSEPKP (89 aa)). The span at 12–22 (NQPTGAGSSPE) shows a compositional bias: polar residues. Phosphoserine occurs at positions 19 and 24. R167 is subject to Omega-N-methylarginine. T212 is modified (phosphothreonine).

The protein belongs to the CMS1 family.

In Homo sapiens (Human), this protein is Protein CMSS1 (CMSS1).